Consider the following 437-residue polypeptide: Enolase (437 aa).

Gln162 contacts (2R)-2-phosphoglycerate. The active-site Proton donor is Glu204. 3 residues coordinate Mg(2+): Asp251, Glu297, and Asp324. (2R)-2-phosphoglycerate is bound by residues Lys349, Arg378, Ser379, and Lys400. The Proton acceptor role is filled by Lys349.

Belongs to the enolase family. Mg(2+) is required as a cofactor.

It localises to the cytoplasm. The protein resides in the secreted. It is found in the cell surface. The catalysed reaction is (2R)-2-phosphoglycerate = phosphoenolpyruvate + H2O. The protein operates within carbohydrate degradation; glycolysis; pyruvate from D-glyceraldehyde 3-phosphate: step 4/5. Functionally, catalyzes the reversible conversion of 2-phosphoglycerate (2-PG) into phosphoenolpyruvate (PEP). It is essential for the degradation of carbohydrates via glycolysis. This chain is Enolase, found in Chlorobium phaeovibrioides (strain DSM 265 / 1930) (Prosthecochloris vibrioformis (strain DSM 265)).